Consider the following 940-residue polypeptide: Acetyl-coenzyme A synthetase (940 aa).

The N-terminal stretch at 1 to 33 is a signal peptide; that stretch reads MCCAIWSASRAPACSASQLSSSHAVRPSVVPDA. The tract at residues 1–289 is unknown; it reads MCCAIWSASR…VQRSVTRLTA (289 aa). 3 disordered regions span residues 70–127, 157–202, and 224–274; these read TARA…RPRC, VAPP…ADSA, and ASSQ…QQTC. 2 stretches are compositionally biased toward polar residues: residues 72–95 and 107–120; these read RATT…TAAS and SSIS…TSGS. Composition is skewed to low complexity over residues 184 to 202 and 224 to 245; these read TAPP…ADSA and ASSQ…SGRS. The segment covering 258-274 has biased composition (polar residues); that stretch reads SSPTVQRNQTTVHQQTC. Residues 290 to 940 form an acetyl-coenzyme A synthetase region; that stretch reads MSNPSHAEVP…SVFEAIRASK (651 aa). Residues 480 to 483 and Thr599 contribute to the CoA site; that span reads RRGK. Residues 675–677, 699–704, Asp796, and Arg811 contribute to the ATP site; these read GEP and DTWWQT. Ser819 is a binding site for CoA. Residue Arg822 coordinates ATP. Residues Val833, His835, and Val838 each contribute to the Mg(2+) site. Lys906 bears the N6-acetyllysine mark.

It belongs to the ATP-dependent AMP-binding enzyme family. It depends on Mg(2+) as a cofactor. In terms of processing, acetylated on Lys-906 by Pat in the presence of acetyl-CoA as an acetyl donor and ATP. Acetylation results in the inactivation of the enzyme. Deacetylation by the SIR2-homolog deacetylase CobB is required to activate the enzyme.

The catalysed reaction is acetate + ATP + CoA = acetyl-CoA + AMP + diphosphate. Catalyzes the conversion of acetate into acetyl-CoA (AcCoA), an essential intermediate at the junction of anabolic and catabolic pathways. AcsA undergoes a two-step reaction. In the first half reaction, AcsA combines acetate with ATP to form acetyl-adenylate (AcAMP) intermediate. In the second half reaction, it can then transfer the acetyl group from AcAMP to the sulfhydryl group of CoA, forming the product AcCoA. The chain is Acetyl-coenzyme A synthetase (acsA) from Mycolicibacterium smegmatis (strain ATCC 700084 / mc(2)155) (Mycobacterium smegmatis).